A 484-amino-acid chain; its full sequence is Cysteine desulfurase, mitochondrial (484 aa).

The span at 29–42 (LATSASTSSSTTTS) shows a compositional bias: low complexity. The segment at 29-69 (LATSASTSSSTTTSNAETGELHVSTPLDSPSVHPPDGSSIS) is disordered. Residues 153 to 154 (AT), asparagine 233, glutamine 261, and 281 to 283 (SSH) each bind pyridoxal 5'-phosphate. Lysine 284 is subject to N6-(pyridoxal phosphate)lysine. Pyridoxal 5'-phosphate is bound at residue threonine 321. The Cysteine persulfide intermediate role is filled by cysteine 408. Cysteine 408 contacts [2Fe-2S] cluster.

The protein belongs to the class-V pyridoxal-phosphate-dependent aminotransferase family. NifS/IscS subfamily. Pyridoxal 5'-phosphate serves as cofactor.

The protein resides in the mitochondrion. It carries out the reaction (sulfur carrier)-H + L-cysteine = (sulfur carrier)-SH + L-alanine. In terms of biological role, catalyzes the removal of elemental sulfur from cysteine to produce alanine. It supplies the inorganic sulfur for iron-sulfur (Fe-S) clusters. Plays a role in both tRNA-processing and mitochondrial metabolism. Involved in the 2-thio-modification of both 5-carboxymethylaminomethyl-2-thiouridine in mitochondrial tRNAs and 5-methoxycarbonylmethyl-2-thiouridine (mcm5s2U) in cytoplasmic tRNAs. The protein is Cysteine desulfurase, mitochondrial of Candida maltosa (Yeast).